The following is a 338-amino-acid chain: Glycerol-3-phosphate dehydrogenase [NAD(P)+] (338 aa).

NADPH is bound by residues Ser14, Tyr15, His35, and Lys109. 3 residues coordinate sn-glycerol 3-phosphate: Lys109, Gly138, and Thr140. Residue Ala142 coordinates NADPH. The sn-glycerol 3-phosphate site is built by Lys194, Asp247, Ser257, Arg258, and Asn259. The active-site Proton acceptor is the Lys194. Arg258 contributes to the NADPH binding site. Positions 282 and 284 each coordinate NADPH.

The protein belongs to the NAD-dependent glycerol-3-phosphate dehydrogenase family.

It is found in the cytoplasm. It catalyses the reaction sn-glycerol 3-phosphate + NAD(+) = dihydroxyacetone phosphate + NADH + H(+). The catalysed reaction is sn-glycerol 3-phosphate + NADP(+) = dihydroxyacetone phosphate + NADPH + H(+). It functions in the pathway membrane lipid metabolism; glycerophospholipid metabolism. Functionally, catalyzes the reduction of the glycolytic intermediate dihydroxyacetone phosphate (DHAP) to sn-glycerol 3-phosphate (G3P), the key precursor for phospholipid synthesis. This is Glycerol-3-phosphate dehydrogenase [NAD(P)+] from Shewanella baltica (strain OS185).